A 507-amino-acid chain; its full sequence is F-box only protein 31 (507 aa).

Residues 19 to 42 (RQQRRGPAETAAADSEADTDPEEE) form a disordered region. At Ser33 the chain carries Phosphoserine. Acidic residues predominate over residues 33–42 (SEADTDPEEE). Residue Thr37 is modified to Phosphothreonine. A D box motif is present at residues 50-55 (RCSLLE). The F-box domain maps to 50–96 (RCSLLELPPELLVEIFASLPGTDLPSLAQVCSRFRRILHTDTIWRRR). Zn(2+)-binding residues include Cys192, His200, Cys216, and His222. Ser264 carries the post-translational modification Phosphoserine; by ATM. Positions 283-285 (DDL) match the DDL motif motif. The segment at 364–421 (RQEQEAGEGPAPHREPAVKDPEGPPAKASKEAGPGAEAAEQSSTSGQGQPFVLPAGVS) is disordered. Over residues 374 to 385 (APHREPAVKDPE) the composition is skewed to basic and acidic residues. Phosphoserine is present on Ser448.

It belongs to the FBXO31 family. As to quaternary structure, part of a SCF (SKP1-cullin-F-box) protein ligase complex SCF(FBXO31) composed of CUL1, SKP1, RBX1 and FBXO31. Interacts (when phosphorylated at Ser-33) with CDC20, promoting ubiquitination by the APC/C complex. Phosphorylation at Ser-264 by ATM following gamma-irradiation results in its stabilization. Phosphorylation at Ser-448 in absence of stress promotes its ubiquitination and degradation by the SCF(FBXO46) complex. Phosphorylation at Ser-33 by AKT1 promotes association with CDC20 and ubiquitination by the APC/C complex. Post-translationally, ubiquitinated by the SCF(FBXO46) complex in absence of stress, promoting its degradation. Ubiquitinated by the APC/C complex following phosphorylation at Ser-33, leading to its degradation by the proteasome.

It is found in the cytoplasm. The protein localises to the cytoskeleton. It localises to the microtubule organizing center. Its subcellular location is the centrosome. The protein operates within protein modification; protein ubiquitination. In terms of biological role, substrate-recognition component of the SCF(FBXO31) protein ligase complex, which specifically mediates the ubiquitination of proteins amidated at their C-terminus in response to oxidative stress, leading to their degradation by the proteasome. FBXO31 specifically recognizes and binds C-terminal peptides bearing an amide: C-terminal amidation in response to oxidative stress takes place following protein fragmentation. The SCF(FBXO31) also plays a role in G1 arrest following DNA damage by mediating ubiquitination of phosphorylated cyclin-D1 (CCND1), promoting its degradation by the proteasome, resulting in G1 arrest. The SCF(FBXO31) complex is however not a major regulator of CCND1 stability during the G1/S transition. In response to genotoxic stress, the SCF(FBXO31) complex directs ubiquitination and degradation of phosphorylated MDM2, thereby promoting p53/TP53-mediated DNA damage response. SCF(FBXO31) complex is required for genomic integrity by catalyzing ubiquitination and degradation of cyclin-A (CCNA1 and/or CCNA2) during the G1 phase. In response to genotoxic stress, the SCF(FBXO31) complex directs ubiquitination and degradation of phosphorylated FBXO46 and MAP2K6. SCF(FBXO31) complex promotes ubiquitination and degradation of CDT1 during the G2 phase to prevent re-replication. The SCF(FBXO31) complex also mediates ubiquitination and degradation of DUSP6, OGT and PARD6A. This Rattus norvegicus (Rat) protein is F-box only protein 31.